A 61-amino-acid polypeptide reads, in one-letter code: Photosystem II reaction center protein K (61 aa).

A propeptide spanning residues 1–24 (MLNIFSLMYICLNSALYSSSFLFA) is cleaved from the precursor. Residues 40–60 (MPVIPVLFFLLAFVWQAAVSF) form a helical membrane-spanning segment.

This sequence belongs to the PsbK family. PSII is composed of 1 copy each of membrane proteins PsbA, PsbB, PsbC, PsbD, PsbE, PsbF, PsbH, PsbI, PsbJ, PsbK, PsbL, PsbM, PsbT, PsbX, PsbY, PsbZ, Psb30/Ycf12, at least 3 peripheral proteins of the oxygen-evolving complex and a large number of cofactors. It forms dimeric complexes.

It is found in the plastid. The protein resides in the chloroplast thylakoid membrane. One of the components of the core complex of photosystem II (PSII). PSII is a light-driven water:plastoquinone oxidoreductase that uses light energy to abstract electrons from H(2)O, generating O(2) and a proton gradient subsequently used for ATP formation. It consists of a core antenna complex that captures photons, and an electron transfer chain that converts photonic excitation into a charge separation. This Citrus sinensis (Sweet orange) protein is Photosystem II reaction center protein K.